Reading from the N-terminus, the 187-residue chain is Transcriptional repressor NrdR (187 aa).

The segment at 1-21 is disordered; that stretch reads MQCPYCQHTNSRVLESRSSEG. Residues 3-34 fold into a zinc finger; that stretch reads CPYCQHTNSRVLESRSSEGGQSIRRRRECLNC. Residues 49-139 form the ATP-cone domain; the sequence is ITVIKHDGKK…VYGRFKGIKD (91 aa). Polar residues-rich tracts occupy residues 152-162 and 170-187; these read ISSPMSQWSKS and SQTSPCLSLTHNGSENSR. Residues 152–187 form a disordered region; sequence ISSPMSQWSKSSTRDRDQSQTSPCLSLTHNGSENSR.

Belongs to the NrdR family. It depends on Zn(2+) as a cofactor.

Its function is as follows. Negatively regulates transcription of bacterial ribonucleotide reductase nrd genes and operons by binding to NrdR-boxes. The polypeptide is Transcriptional repressor NrdR (Crocosphaera subtropica (strain ATCC 51142 / BH68) (Cyanothece sp. (strain ATCC 51142))).